A 450-amino-acid polypeptide reads, in one-letter code: MELKEKRVFVAGLGVSGVALCRVLVNLGANVIAYDRKNEIALKEALEELKDLPVEIKLGEFKEEFLKGIELVVLSPGISLESEIVKKAKDMGLEILGEVELAYRLSKAPIYAITGTNGKTTTTSLLGEMFRNAGRKVYVAGNIGYPLIYAALEAGPNDHIVAEISSFQLETVKEFRPKISCIINITPDHLDRHKTFENYANIKGRIFENQREEEYVVLNYDDPVTWGLKERAKAKVFPFSRKKVLENGAYVKEGFLYLQNKKVIKVEDIYIPGEHNLENALAASSVAYLSGIEVDAIETTLRTFKGVEHRIEFVAEIEGIKFYNDSKGTNPDASIKAIQALKTPIVLIAGGYDKGSEFDEFVKTFDKKVRKLILIGQTAQKIKKTALKYSYPEEDIFLVDSLEEAVRKAYEVAEKGDSVLLSPACASWDMFKNFEERGKAFKKAVMDLRR.

115 to 121 (GTNGKTT) contacts ATP.

Belongs to the MurCDEF family.

Its subcellular location is the cytoplasm. It carries out the reaction UDP-N-acetyl-alpha-D-muramoyl-L-alanine + D-glutamate + ATP = UDP-N-acetyl-alpha-D-muramoyl-L-alanyl-D-glutamate + ADP + phosphate + H(+). It functions in the pathway cell wall biogenesis; peptidoglycan biosynthesis. Its function is as follows. Cell wall formation. Catalyzes the addition of glutamate to the nucleotide precursor UDP-N-acetylmuramoyl-L-alanine (UMA). This Caldanaerobacter subterraneus subsp. tengcongensis (strain DSM 15242 / JCM 11007 / NBRC 100824 / MB4) (Thermoanaerobacter tengcongensis) protein is UDP-N-acetylmuramoylalanine--D-glutamate ligase.